We begin with the raw amino-acid sequence, 349 residues long: D-alanine--D-alanine ligase (349 aa).

Positions 133-335 constitute an ATP-grasp domain; sequence QVLESATTIP…YSVLIEELVS (203 aa). 163-218 serves as a coordination point for ATP; the sequence is EEKLIYPVFVKPANMGSSVGISKAENRTDLKQAIALALKYDSRVLIEQGVDAREIE. Mg(2+)-binding residues include aspartate 289, glutamate 302, and asparagine 304.

Belongs to the D-alanine--D-alanine ligase family. Requires Mg(2+) as cofactor. The cofactor is Mn(2+).

Its subcellular location is the cytoplasm. The enzyme catalyses 2 D-alanine + ATP = D-alanyl-D-alanine + ADP + phosphate + H(+). It functions in the pathway cell wall biogenesis; peptidoglycan biosynthesis. Cell wall formation. This is D-alanine--D-alanine ligase from Streptococcus mutans serotype c (strain ATCC 700610 / UA159).